The chain runs to 99 residues: Aspartyl/glutamyl-tRNA(Asn/Gln) amidotransferase subunit C (99 aa).

Belongs to the GatC family. As to quaternary structure, heterotrimer of A, B and C subunits.

It carries out the reaction L-glutamyl-tRNA(Gln) + L-glutamine + ATP + H2O = L-glutaminyl-tRNA(Gln) + L-glutamate + ADP + phosphate + H(+). The catalysed reaction is L-aspartyl-tRNA(Asn) + L-glutamine + ATP + H2O = L-asparaginyl-tRNA(Asn) + L-glutamate + ADP + phosphate + 2 H(+). In terms of biological role, allows the formation of correctly charged Asn-tRNA(Asn) or Gln-tRNA(Gln) through the transamidation of misacylated Asp-tRNA(Asn) or Glu-tRNA(Gln) in organisms which lack either or both of asparaginyl-tRNA or glutaminyl-tRNA synthetases. The reaction takes place in the presence of glutamine and ATP through an activated phospho-Asp-tRNA(Asn) or phospho-Glu-tRNA(Gln). The polypeptide is Aspartyl/glutamyl-tRNA(Asn/Gln) amidotransferase subunit C (Variovorax paradoxus (strain S110)).